The following is a 77-amino-acid chain: Acyl carrier protein (77 aa).

A Carrier domain is found at 2-77 (SNIEERVKKI…AAIDYVSKNQ (76 aa)). An O-(pantetheine 4'-phosphoryl)serine modification is found at S37.

This sequence belongs to the acyl carrier protein (ACP) family. 4'-phosphopantetheine is transferred from CoA to a specific serine of apo-ACP by AcpS. This modification is essential for activity because fatty acids are bound in thioester linkage to the sulfhydryl of the prosthetic group.

It is found in the cytoplasm. It functions in the pathway lipid metabolism; fatty acid biosynthesis. Carrier of the growing fatty acid chain in fatty acid biosynthesis. In Shewanella denitrificans (strain OS217 / ATCC BAA-1090 / DSM 15013), this protein is Acyl carrier protein.